We begin with the raw amino-acid sequence, 1193 residues long: Magnesium-chelatase subunit H (1193 aa).

Belongs to the Mg-chelatase subunit H family.

The enzyme catalyses protoporphyrin IX + Mg(2+) + ATP + H2O = Mg-protoporphyrin IX + ADP + phosphate + 3 H(+). It functions in the pathway porphyrin-containing compound metabolism; bacteriochlorophyll biosynthesis (light-independent). In terms of biological role, involved in bacteriochlorophyll pigment biosynthesis; introduces a magnesium ion into protoporphyrin IX to yield Mg-protoroporphyrin IX. This chain is Magnesium-chelatase subunit H (bchH), found in Cereibacter sphaeroides (strain ATCC 17023 / DSM 158 / JCM 6121 / CCUG 31486 / LMG 2827 / NBRC 12203 / NCIMB 8253 / ATH 2.4.1.) (Rhodobacter sphaeroides).